The primary structure comprises 80 residues: Putative defensin-like protein 23 (80 aa).

Positions 1-25 (MTTTMKIMSFAMLLVLLFSIDVVEG) are cleaved as a signal peptide. Disulfide bonds link cysteine 31/cysteine 80, cysteine 41/cysteine 66, cysteine 50/cysteine 76, and cysteine 54/cysteine 78.

This sequence belongs to the DEFL family.

The protein localises to the secreted. The chain is Putative defensin-like protein 23 from Arabidopsis thaliana (Mouse-ear cress).